Here is a 348-residue protein sequence, read N- to C-terminus: Putative [LysW]-L-2-aminoadipate/[LysW]-L-glutamate phosphate reductase (348 aa).

9 to 12 (SGYV) contributes to the NADP(+) binding site. C149 is a catalytic residue. N315 contributes to the NADP(+) binding site.

Belongs to the NAGSA dehydrogenase family. Type 1 subfamily. LysY sub-subfamily.

The protein localises to the cytoplasm. It catalyses the reaction [amino-group carrier protein]-C-terminal-N-(1-carboxy-5-oxopentan-1-yl)-L-glutamine + phosphate + NADP(+) = [amino-group carrier protein]-C-terminal-N-(1-carboxy-5-phosphooxy-5-oxopentan-1-yl)-L-glutamine + NADPH + H(+). It carries out the reaction [amino-group carrier protein]-C-terminal-gamma-(L-glutamyl-5-semialdehyde)-L-glutamate + phosphate + NADP(+) = [amino-group carrier protein]-C-terminal-gamma-(5-phospho-L-glutamyl)-L-glutamate + NADPH + H(+). The protein operates within amino-acid biosynthesis; L-lysine biosynthesis via AAA pathway; L-lysine from L-alpha-aminoadipate (Thermus route): step 3/5. It functions in the pathway amino-acid biosynthesis; L-arginine biosynthesis. In terms of biological role, involved in both the arginine and lysine biosynthetic pathways. This Nitrosopumilus maritimus (strain SCM1) protein is Putative [LysW]-L-2-aminoadipate/[LysW]-L-glutamate phosphate reductase.